The chain runs to 466 residues: 3-isopropylmalate dehydratase large subunit (466 aa).

Residues cysteine 347, cysteine 407, and cysteine 410 each coordinate [4Fe-4S] cluster.

This sequence belongs to the aconitase/IPM isomerase family. LeuC type 1 subfamily. Heterodimer of LeuC and LeuD. [4Fe-4S] cluster serves as cofactor.

The enzyme catalyses (2R,3S)-3-isopropylmalate = (2S)-2-isopropylmalate. Its pathway is amino-acid biosynthesis; L-leucine biosynthesis; L-leucine from 3-methyl-2-oxobutanoate: step 2/4. Functionally, catalyzes the isomerization between 2-isopropylmalate and 3-isopropylmalate, via the formation of 2-isopropylmaleate. The protein is 3-isopropylmalate dehydratase large subunit of Citrobacter koseri (strain ATCC BAA-895 / CDC 4225-83 / SGSC4696).